The chain runs to 77 residues: U8-lycotoxin-Ls1m (77 aa).

The signal sequence occupies residues methionine 1 to alanine 20. Residues glutamine 21–lysine 26 constitute a propeptide that is removed on maturation.

The protein belongs to the neurotoxin 19 (CSTX) family. 08 (U8-Lctx) subfamily. Contains 4 disulfide bonds. Expressed by the venom gland.

The protein resides in the secreted. This is U8-lycotoxin-Ls1m from Lycosa singoriensis (Wolf spider).